Here is an 839-residue protein sequence, read N- to C-terminus: Autophagy-related protein 9A (839 aa).

The disordered stretch occupies residues 1 to 20; that stretch reads MAQFDTEYQRLEASYSDSPP. Residue A2 is modified to N-acetylalanine. Residues 2–61 lie on the Cytoplasmic side of the membrane; that stretch reads AQFDTEYQRLEASYSDSPPGEEDLLVHVAEGSKSPWHHIENLDLFFSRVYNLHQKNGFTC. The Tyrosine-based sorting signal motif lies at 8–11; that stretch reads YQRL. Phosphoserine is present on residues S14, S16, and S18. Residues 62 to 84 traverse the membrane as a helical segment; that stretch reads MLIGEIFELMQFLFVVAFTTFLV. Residues 85–128 lie on the Lumenal side of the membrane; the sequence is SCVDYDILFANKMVNHSLHPTEPVKVTLPDAFLPAQVCSARIQE. A glycan (N-linked (GlcNAc...) asparagine) is linked at N99. A helical membrane pass occupies residues 129-154; that stretch reads NGSLITILVIAGVFWIHRLIKFIYNI. Topologically, residues 155–290 are cytoplasmic; that stretch reads CCYWEIHSFY…ELAQRLSNRI (136 aa). An intramembrane segment occupies 291–301; it reads LWIGIANFLLC. The Cytoplasmic portion of the chain corresponds to 302–319; it reads PLILIWQILYAFFSYAEV. The stretch at 320–328 is an intramembrane region; the sequence is LKREPGALG. At 329–371 the chain is on the cytoplasmic side; the sequence is ARCWSLYGRCYLRHFNELEHELQSRLNRGYKPASKYMNCFLSP. The chain crosses the membrane as a helical span at residues 372–397; sequence LLTLLAKNGAFFAGSILAVLIALTIY. Topologically, residues 398–406 are lumenal; it reads DEDVLAVEH. Residues 407–424 traverse the membrane as a helical segment; the sequence is VLTTVTLLGVTVTVCRSF. Over 425-470 the chain is Cytoplasmic; sequence IPDQHMVFCPEQLLRVILAHIHYMPDHWQGNAHRSQTRDEFAQLFQ. Residues 471-480 lie within the membrane without spanning it; that stretch reads YKAVFILEEL. Residues 481-483 are Cytoplasmic-facing; it reads LSP. An intramembrane segment occupies 484-492; sequence IVTPLILIF. Topologically, residues 493-839 are cytoplasmic; that stretch reads CLRPRALEII…DELPPQVHKV (347 aa). 5 positions are modified to phosphoserine: S656, S735, S738, S741, and S828. 2 disordered regions span residues 656-686 and 719-839; these read SPLQ…SSGS and QQAQ…VHKV. Residues 724–736 are compositionally biased toward basic and acidic residues; sequence EPERHLWHRRESD. Acidic residues-rich tracts occupy residues 737–747 and 823–832; these read ESGESAPDEGG and VPEEGSEDEL.

This sequence belongs to the ATG9 family. Homotrimer; forms a homotrimer with a central pore that forms a path between the two membrane leaflets. Interacts (via cytoplasmic its C-terminus) with ATG2A. Interacts with SUPT20H. Interacts (via the tyrosine-based sorting signal motif) with AP4M1; promoting association with the AP-4 complex. Interacts with ARFIP1 and ARFIP2. Interacts with PI4K2A and PI4KB. Interacts with ATG4A; the interaction is direct and promotes ATG9A trafficking. Ufmylated in a DDRGK1 dependent manner.

It localises to the preautophagosomal structure membrane. The protein resides in the cytoplasmic vesicle. The protein localises to the autophagosome membrane. It is found in the golgi apparatus. Its subcellular location is the trans-Golgi network membrane. It localises to the late endosome membrane. The protein resides in the recycling endosome membrane. The protein localises to the endoplasmic reticulum membrane. It is found in the mitochondrion membrane. The catalysed reaction is a 1,2-diacyl-sn-glycero-3-phosphocholine(in) = a 1,2-diacyl-sn-glycero-3-phosphocholine(out). It catalyses the reaction a 1,2-diacyl-sn-glycero-3-phospho-L-serine(in) = a 1,2-diacyl-sn-glycero-3-phospho-L-serine(out). The enzyme catalyses a 1,2-diacyl-sn-glycero-3-phosphoethanolamine(in) = a 1,2-diacyl-sn-glycero-3-phosphoethanolamine(out). Phospholipid scramblase involved in autophagy by mediating autophagosomal membrane expansion. Cycles between the preautophagosomal structure/phagophore assembly site (PAS) and the cytoplasmic vesicle pool and supplies membrane for the growing autophagosome. Lipid scramblase activity plays a key role in preautophagosomal structure/phagophore assembly by distributing the phospholipids that arrive through ATG2 (ATG2A or ATG2B) from the cytoplasmic to the luminal leaflet of the bilayer, thereby driving autophagosomal membrane expansion. Also required to supply phosphatidylinositol 4-phosphate to the autophagosome initiation site by recruiting the phosphatidylinositol 4-kinase beta (PI4KB) in a process dependent on ARFIP2, but not ARFIP1. In addition to autophagy, also plays a role in necrotic cell death. This chain is Autophagy-related protein 9A, found in Pongo abelii (Sumatran orangutan).